Consider the following 119-residue polypeptide: Hemerythrin subunit A (119 aa).

Positions 26, 55, 59, 74, 78, 107, and 112 each coordinate Fe cation.

This sequence belongs to the hemerythrin family.

Functionally, hemerythrin is a respiratory protein in blood cells of certain marine worms. The oxygen-binding site in each chain contains two iron atoms. The protein is Hemerythrin subunit A of Sipunculus nudus (Sipunculan worm).